Consider the following 230-residue polypeptide: MTDDDRIKLEPSWKAALRGEFDQPYMHQLREFLRGEYAAGKEIYPPGPLIFNALNSTPLGQVKVVILGQDPYHGPGQAHGLCFSVQPGVATPPSLVNIYKELQRDLNIPIPSHGYLQSWAEQGVLLLNTTMTVERANAASHAKKGWELFTDRIIQVVSEQCPNVVFLLWGAHAQSKQKLIDGTKHLVLKSVHPSPLSAYRGFIGCGHFSRTNSFLEQRGLGPIDWALPPL.

D70 serves as the catalytic Proton acceptor.

The protein belongs to the uracil-DNA glycosylase (UDG) superfamily. UNG family.

Its subcellular location is the cytoplasm. It carries out the reaction Hydrolyzes single-stranded DNA or mismatched double-stranded DNA and polynucleotides, releasing free uracil.. Functionally, excises uracil residues from the DNA which can arise as a result of misincorporation of dUMP residues by DNA polymerase or due to deamination of cytosine. This is Uracil-DNA glycosylase from Pseudomonas putida (strain ATCC 700007 / DSM 6899 / JCM 31910 / BCRC 17059 / LMG 24140 / F1).